A 162-amino-acid polypeptide reads, in one-letter code: Small ribosomal subunit protein uS9 (162 aa).

This sequence belongs to the universal ribosomal protein uS9 family.

The sequence is that of Small ribosomal subunit protein uS9 from Methylobacterium sp. (strain 4-46).